A 333-amino-acid polypeptide reads, in one-letter code: Glycogenin-1 (333 aa).

N-acetylthreonine is present on Thr2. UDP contacts are provided by Leu9, Thr11, Asn12, and Tyr15. Residues Leu9, Thr11, Asn12, and Tyr15 each coordinate UDP-alpha-D-glucose. Phosphoserine; by PKA; in vitro is present on Ser44. Arg77 is a UDP binding site. The UDP-alpha-D-glucose site is built by Arg77, Lys86, Asp102, Ala103, Asp104, Asn133, Ser134, Asp160, Asp163, and Gln164. Residues Asp102, Ala103, and Asp104 each coordinate UDP. Asp102 serves as a coordination point for Mn(2+). Asp104 is a Mn(2+) binding site. Residue Tyr195 is glycosylated (O-linked (Glc...) tyrosine). His212, Gly215, and Lys218 together coordinate UDP. His212 is a binding site for Mn(2+). Residues Gly215 and Lys218 each contribute to the UDP-alpha-D-glucose site. The interval 284–316 is interaction with GYS1; it reads SHLSLGETPATTQPFVSSEERKERWEQGQADYM.

It belongs to the glycosyltransferase 8 family. Glycogenin subfamily. Part of the GYS1-GYG1 complex, a heterooctamer composed of a tetramer of GYS1 and 2 dimers of GYG1, where each GYS1 protomer binds to one GYG1 subunit (via GYG1 C-terminus); the GYS1 tetramer may dissociate from GYG1 dimers to continue glycogen polymerization on its own. May also form a heterooctamer complex with GYS2 (via GYG1 C-terminus). It depends on Mn(2+) as a cofactor. In terms of processing, self-glycosylated by the transfer of glucose residues from UDP-glucose to itself, forming an alpha-1,4-glycan of around 10 residues attached to Tyr-195. Post-translationally, phosphorylated. In terms of tissue distribution, detected in heart, skeletal muscle, brain and testis, and at lower levels in kidney.

The protein localises to the cytoplasm. The protein resides in the nucleus. It catalyses the reaction L-tyrosyl-[glycogenin] + UDP-alpha-D-glucose = alpha-D-glucosyl-L-tyrosyl-[glycogenin] + UDP + H(+). It carries out the reaction [1,4-alpha-D-glucosyl](n)-L-tyrosyl-[glycogenin] + UDP-alpha-D-glucose = [1,4-alpha-D-glucosyl](n+1)-L-tyrosyl-[glycogenin] + UDP + H(+). It participates in glycan biosynthesis; glycogen biosynthesis. In terms of biological role, glycogenin participates in the glycogen biosynthetic process along with glycogen synthase and glycogen branching enzyme. It catalyzes the formation of a short alpha (1,4)-glucosyl chain covalently attached via a glucose 1-O-tyrosyl linkage to internal tyrosine residues and these chains act as primers for the elongation reaction catalyzed by glycogen synthase. This chain is Glycogenin-1 (GYG1), found in Oryctolagus cuniculus (Rabbit).